Reading from the N-terminus, the 376-residue chain is Succinyl-diaminopimelate desuccinylase (376 aa).

His-68 provides a ligand contact to Zn(2+). The active site involves Asp-70. Residue Asp-101 coordinates Zn(2+). Glu-135 serves as the catalytic Proton acceptor. Positions 136, 164, and 349 each coordinate Zn(2+).

It belongs to the peptidase M20A family. DapE subfamily. Homodimer. The cofactor is Zn(2+). Requires Co(2+) as cofactor.

It carries out the reaction N-succinyl-(2S,6S)-2,6-diaminopimelate + H2O = (2S,6S)-2,6-diaminopimelate + succinate. The protein operates within amino-acid biosynthesis; L-lysine biosynthesis via DAP pathway; LL-2,6-diaminopimelate from (S)-tetrahydrodipicolinate (succinylase route): step 3/3. Its function is as follows. Catalyzes the hydrolysis of N-succinyl-L,L-diaminopimelic acid (SDAP), forming succinate and LL-2,6-diaminopimelate (DAP), an intermediate involved in the bacterial biosynthesis of lysine and meso-diaminopimelic acid, an essential component of bacterial cell walls. This chain is Succinyl-diaminopimelate desuccinylase, found in Marinobacter nauticus (strain ATCC 700491 / DSM 11845 / VT8) (Marinobacter aquaeolei).